A 166-amino-acid polypeptide reads, in one-letter code: Putative 4-hydroxy-4-methyl-2-oxoglutarate aldolase (166 aa).

Residues 74–77 (GDQI) and Arg96 contribute to the substrate site. Asp97 is a binding site for a divalent metal cation.

The protein belongs to the class II aldolase/RraA-like family. Homotrimer. A divalent metal cation serves as cofactor.

It catalyses the reaction 4-hydroxy-4-methyl-2-oxoglutarate = 2 pyruvate. The enzyme catalyses oxaloacetate + H(+) = pyruvate + CO2. Catalyzes the aldol cleavage of 4-hydroxy-4-methyl-2-oxoglutarate (HMG) into 2 molecules of pyruvate. Also contains a secondary oxaloacetate (OAA) decarboxylase activity due to the common pyruvate enolate transition state formed following C-C bond cleavage in the retro-aldol and decarboxylation reactions. This is Putative 4-hydroxy-4-methyl-2-oxoglutarate aldolase from Xanthomonas campestris pv. campestris (strain B100).